Consider the following 820-residue polypeptide: Quinate repressor protein (820 aa).

Positions 25 to 79 (SFEQMLLQQDSNESSRRTSPSRTHSRVDLERHSSHIVSLSSSNGSPSLEDPENRL) are disordered. A compositionally biased stretch (low complexity) spans 59–71 (HIVSLSSSNGSPS).

The protein in the N-terminal section; belongs to the shikimate kinase family. In the 2nd section; belongs to the type-I 3-dehydroquinase family. This sequence in the C-terminal section; belongs to the shikimate dehydrogenase family. Interacts with qutA; transcriptional activator of the quinate utilization pathway genes.

Multi-domain repressor protein that negatively regulates transcription of the quinate utilization pathway genes. May mediate its repressor activity by binding directly to the qutA activator protein. The chain is Quinate repressor protein (qutR) from Talaromyces stipitatus (strain ATCC 10500 / CBS 375.48 / QM 6759 / NRRL 1006) (Penicillium stipitatum).